Consider the following 671-residue polypeptide: Probable potassium transport system protein Kup 2 (671 aa).

12 helical membrane passes run 18 to 38 (GFLI…LYAM), 60 to 80 (VSLV…LIAL), 103 to 123 (WLIV…ALTP), 149 to 169 (VTTL…ASLV), 173 to 193 (FGPI…INSF), 218 to 238 (AGFF…ALYS), 252 to 272 (WPFV…WLLA), 292 to 312 (MVIY…QALI), 343 to 363 (LYIP…VLYF), 373 to 393 (YSLA…YFLI), 402 to 422 (IAFI…ASLV), and 424 to 444 (FING…VMFI).

Belongs to the HAK/KUP transporter (TC 2.A.72) family.

The protein localises to the cell membrane. It carries out the reaction K(+)(in) + H(+)(in) = K(+)(out) + H(+)(out). Functionally, transport of potassium into the cell. Likely operates as a K(+):H(+) symporter. The polypeptide is Probable potassium transport system protein Kup 2 (Lactococcus lactis subsp. cremoris (strain SK11)).